We begin with the raw amino-acid sequence, 260 residues long: UPF0246 protein BTH_I1090 (260 aa).

It belongs to the UPF0246 family.

In Burkholderia thailandensis (strain ATCC 700388 / DSM 13276 / CCUG 48851 / CIP 106301 / E264), this protein is UPF0246 protein BTH_I1090.